The sequence spans 35 residues: Dermonecrotic toxin LrSicTox-alphaI-1 (35 aa).

The active site involves histidine 11. Aspartate 33 serves as a coordination point for Mg(2+).

It belongs to the arthropod phospholipase D family. Class II subfamily. The cofactor is Mg(2+). In terms of processing, contains 2 disulfide bonds. Expressed by the venom gland.

The protein localises to the secreted. It carries out the reaction an N-(acyl)-sphingosylphosphocholine = an N-(acyl)-sphingosyl-1,3-cyclic phosphate + choline. The catalysed reaction is an N-(acyl)-sphingosylphosphoethanolamine = an N-(acyl)-sphingosyl-1,3-cyclic phosphate + ethanolamine. The enzyme catalyses a 1-acyl-sn-glycero-3-phosphocholine = a 1-acyl-sn-glycero-2,3-cyclic phosphate + choline. It catalyses the reaction a 1-acyl-sn-glycero-3-phosphoethanolamine = a 1-acyl-sn-glycero-2,3-cyclic phosphate + ethanolamine. Functionally, dermonecrotic toxins cleave the phosphodiester linkage between the phosphate and headgroup of certain phospholipids (sphingolipid and lysolipid substrates), forming an alcohol (often choline) and a cyclic phosphate. This toxin acts on sphingomyelin (SM). It may also act on ceramide phosphoethanolamine (CPE), lysophosphatidylcholine (LPC) and lysophosphatidylethanolamine (LPE), but not on lysophosphatidylserine (LPS), and lysophosphatidylglycerol (LPG). It acts by transphosphatidylation, releasing exclusively cyclic phosphate products as second products. Induces dermonecrosis, hemolysis, increased vascular permeability, edema, inflammatory response, and platelet aggregation. This chain is Dermonecrotic toxin LrSicTox-alphaI-1, found in Loxosceles reclusa (Brown recluse spider).